The sequence spans 256 residues: Protein FixA (256 aa).

It belongs to the ETF beta-subunit/FixA family. Heterodimer of FixA and FixB.

It functions in the pathway amine and polyamine metabolism; carnitine metabolism. In terms of biological role, required for anaerobic carnitine reduction. May bring reductant to CaiA. This is Protein FixA from Salmonella dublin (strain CT_02021853).